We begin with the raw amino-acid sequence, 242 residues long: Octanoyltransferase (242 aa).

The region spanning 31 to 206 is the BPL/LPL catalytic domain; it reads SQTTDEIWFL…LFLKNFGYNQ (176 aa). Residues 70 to 77, 137 to 139, and 150 to 152 contribute to the substrate site; these read RGGQVTYH, SIG, and GLA. Residue cysteine 168 is the Acyl-thioester intermediate of the active site.

It belongs to the LipB family.

The protein resides in the cytoplasm. It catalyses the reaction octanoyl-[ACP] + L-lysyl-[protein] = N(6)-octanoyl-L-lysyl-[protein] + holo-[ACP] + H(+). The protein operates within protein modification; protein lipoylation via endogenous pathway; protein N(6)-(lipoyl)lysine from octanoyl-[acyl-carrier-protein]: step 1/2. Catalyzes the transfer of endogenously produced octanoic acid from octanoyl-acyl-carrier-protein onto the lipoyl domains of lipoate-dependent enzymes. Lipoyl-ACP can also act as a substrate although octanoyl-ACP is likely to be the physiological substrate. In Coxiella burnetii (strain Dugway 5J108-111), this protein is Octanoyltransferase.